The primary structure comprises 298 residues: Proline iminopeptidase (298 aa).

In terms of domain architecture, AB hydrolase-1 spans 26–277; it reads VLLLHGGPAM…NGSHLAMWDD (252 aa). Catalysis depends on Ser103, which acts as the Nucleophile. The active site involves Asp244. The active-site Proton donor is the His271.

The protein belongs to the peptidase S33 family. In terms of assembly, monomer.

It catalyses the reaction Release of N-terminal proline from a peptide.. In terms of biological role, releases the N-terminal proline from various substrates. Cleaves specifically Pro-betaNA and small peptides containing proline at the amino terminal. No activity against hydroxyproline-betaNA. The chain is Proline iminopeptidase (fpaP) from Elizabethkingia meningoseptica (Chryseobacterium meningosepticum).